Reading from the N-terminus, the 599-residue chain is UvrABC system protein C (599 aa).

Positions 15 to 93 constitute a GIY-YIG domain; it reads PCPGVYRMLD…IKALQPRYNV (79 aa). Residues 202-237 enclose the UVR domain; it reads QQVINELVIRMEEASGQLAFEQAAYYRDRIASLRQI.

This sequence belongs to the UvrC family. Interacts with UvrB in an incision complex.

It localises to the cytoplasm. Functionally, the UvrABC repair system catalyzes the recognition and processing of DNA lesions. UvrC both incises the 5' and 3' sides of the lesion. The N-terminal half is responsible for the 3' incision and the C-terminal half is responsible for the 5' incision. This Nitrosococcus oceani (strain ATCC 19707 / BCRC 17464 / JCM 30415 / NCIMB 11848 / C-107) protein is UvrABC system protein C.